The primary structure comprises 245 residues: GATA zinc finger domain-containing protein 1 (245 aa).

The segment at 9 to 33 (CSMCKTNTSSMWKKGSQGEILCNNC) adopts a GATA-type zinc-finger fold. Residues 39-70 (TAAGGNNNNNSSSSTSGSSSYTGTTFASTSTS) show a composition bias toward low complexity. The tract at residues 39 to 110 (TAAGGNNNNN…PAAEKKVSTK (72 aa)) is disordered. The segment covering 71–80 (QQSNGGNTKQ) has biased composition (polar residues).

Its subcellular location is the nucleus. Functionally, component of some chromatin complex recruited to chromatin sites methylated 'Lys-4' of histone H3 (H3K4me), with a preference for trimethylated form (H3K4me3). This Xenopus laevis (African clawed frog) protein is GATA zinc finger domain-containing protein 1 (gatad1).